A 360-amino-acid chain; its full sequence is UDP-D-xylose:L-fucose alpha-1,3-D-xylosyltransferase MGP4 (360 aa).

The tract at residues 1–25 is disordered; the sequence is MAQQKFLHQRPIQNPFTNPFSSSPL. Residues 1-41 are Cytoplasmic-facing; the sequence is MAQQKFLHQRPIQNPFTNPFSSSPLSTSSISNRPISLLSRN. Positions 14–25 are enriched in low complexity; that stretch reads NPFTNPFSSSPL. Residues 42 to 62 traverse the membrane as a helical; Signal-anchor for type II membrane protein segment; that stretch reads GLLLLLALLVILGVFLPWAGS. Residues 63 to 360 lie on the Lumenal side of the membrane; the sequence is PLFPSPNKLS…ASESPLGKLE (298 aa). Residues asparagine 93 and asparagine 168 are each glycosylated (N-linked (GlcNAc...) asparagine). The short motif at 191–193 is the DXD motif element; sequence DVD. 2 N-linked (GlcNAc...) asparagine glycosylation sites follow: asparagine 285 and asparagine 310.

The protein belongs to the glycosyltransferase 77 family. Requires Mn(2+) as cofactor. Mg(2+) is required as a cofactor. Widely expressed.

It localises to the golgi apparatus membrane. Catalyzes the transfer of D-xylose from UDP-alpha-D-xylose onto L-fucose. Probably involved in the biosynthesis of rhamnogalacturonan II (RG-II) through xylosylation of the internal fucose moiety of the A-chain of RG-II, a structurally complex pectic polysaccharide of the primary cell wall. RG-II is essential for the cell wall integrity of rapidly growing tissues such as roots and pollen tube growth and elongation. In Arabidopsis thaliana (Mouse-ear cress), this protein is UDP-D-xylose:L-fucose alpha-1,3-D-xylosyltransferase MGP4.